We begin with the raw amino-acid sequence, 317 residues long: tRNA pseudouridine synthase B (317 aa).

The active-site Nucleophile is the D47.

Belongs to the pseudouridine synthase TruB family. Type 1 subfamily.

The catalysed reaction is uridine(55) in tRNA = pseudouridine(55) in tRNA. In terms of biological role, responsible for synthesis of pseudouridine from uracil-55 in the psi GC loop of transfer RNAs. The chain is tRNA pseudouridine synthase B from Shewanella sp. (strain MR-7).